The primary structure comprises 789 residues: Phenylalanine--tRNA ligase beta subunit (789 aa).

Positions 38-151 constitute a tRNA-binding domain; that stretch reads KKHLQSFVVV…NTYNVGESFF (114 aa). Residues 398–474 enclose the B5 domain; it reads HNDILLNFSP…RLYGYDKILE (77 aa). The Mg(2+) site is built by aspartate 452, aspartate 458, glutamate 461, and glutamate 462. An FDX-ACB domain is found at 694–787; the sequence is LRYQSVKRDF…ISKGFNGILR (94 aa).

This sequence belongs to the phenylalanyl-tRNA synthetase beta subunit family. Type 1 subfamily. In terms of assembly, tetramer of two alpha and two beta subunits. The cofactor is Mg(2+).

Its subcellular location is the cytoplasm. It carries out the reaction tRNA(Phe) + L-phenylalanine + ATP = L-phenylalanyl-tRNA(Phe) + AMP + diphosphate + H(+). The sequence is that of Phenylalanine--tRNA ligase beta subunit from Ehrlichia ruminantium (strain Gardel).